The primary structure comprises 505 residues: ATP synthase subunit alpha (505 aa).

Residue 171–178 (GDRQTGKT) coordinates ATP.

Belongs to the ATPase alpha/beta chains family. F-type ATPases have 2 components, CF(1) - the catalytic core - and CF(0) - the membrane proton channel. CF(1) has five subunits: alpha(3), beta(3), gamma(1), delta(1), epsilon(1). CF(0) has three main subunits: a(1), b(2) and c(9-12). The alpha and beta chains form an alternating ring which encloses part of the gamma chain. CF(1) is attached to CF(0) by a central stalk formed by the gamma and epsilon chains, while a peripheral stalk is formed by the delta and b chains.

It is found in the cell inner membrane. The enzyme catalyses ATP + H2O + 4 H(+)(in) = ADP + phosphate + 5 H(+)(out). Its function is as follows. Produces ATP from ADP in the presence of a proton gradient across the membrane. The alpha chain is a regulatory subunit. This chain is ATP synthase subunit alpha, found in Aliarcobacter butzleri (strain RM4018) (Arcobacter butzleri).